Consider the following 133-residue polypeptide: Large ribosomal subunit protein uL14 (133 aa).

This sequence belongs to the universal ribosomal protein uL14 family. As to quaternary structure, part of the 50S ribosomal subunit. Forms a cluster with proteins L3 and L24e, part of which may contact the 16S rRNA in 2 intersubunit bridges.

Binds to 23S rRNA. Forms part of two intersubunit bridges in the 70S ribosome. The sequence is that of Large ribosomal subunit protein uL14 from Nanoarchaeum equitans (strain Kin4-M).